The primary structure comprises 359 residues: DNA replication and repair protein RecF (359 aa).

30 to 37 (GANGSGKT) is a binding site for ATP.

Belongs to the RecF family.

It localises to the cytoplasm. In terms of biological role, the RecF protein is involved in DNA metabolism; it is required for DNA replication and normal SOS inducibility. RecF binds preferentially to single-stranded, linear DNA. It also seems to bind ATP. The chain is DNA replication and repair protein RecF from Vibrio atlanticus (strain LGP32) (Vibrio splendidus (strain Mel32)).